The sequence spans 414 residues: Serine/threonine transporter SstT (414 aa).

At 2 to 15 (TTQRSPGLFRRLAH) the chain is on the cytoplasmic side. The chain crosses the membrane as a helical span at residues 16–36 (GSLVKQILVGLVLGILLAWIS). Topologically, residues 37 to 45 (KPAAEAVGL) are periplasmic. Residues 46–66 (LGTLFVGALKAVAPILVLMLV) traverse the membrane as a helical segment. Residues 67–83 (MASIANHQHGQKTNIRP) are Cytoplasmic-facing. Residues 84-104 (ILFLYLLGTFSAALAAVVFSF) traverse the membrane as a helical segment. Residues 105 to 142 (AFPSTLHLSSSAGDISPPSGIVEVMRGLVMSMVSNPID) are Periplasmic-facing. Residues 143 to 163 (ALLKGNYIGILVWAIGLGFAL) traverse the membrane as a helical segment. Residues 164-179 (RHGNETTKNLVNDLSN) lie on the Cytoplasmic side of the membrane. Residues 180–200 (AVTFMVKLVIRFAPIGIFGLV) traverse the membrane as a helical segment. Residues 201–217 (SSTLATTGFSTLWGYAQ) are Periplasmic-facing. The helical transmembrane segment at 218 to 238 (LLVVLVGCMLLVALVVNPLLV) threads the bilayer. Over 239–299 (WWKIRRNPFP…VSIPLGATIN (61 aa)) the chain is Cytoplasmic. Residues 300–320 (MAGAAITITVLTLAAVNTLGI) traverse the membrane as a helical segment. Residues 321–331 (PVDLPTALLLS) lie on the Periplasmic side of the membrane. Residues 332–352 (VVASLCACGASGVAGGSLLLI) form a helical membrane-spanning segment. Topologically, residues 353-414 (PLACNMFGIS…DRLANSALRN (62 aa)) are cytoplasmic.

This sequence belongs to the dicarboxylate/amino acid:cation symporter (DAACS) (TC 2.A.23) family.

The protein localises to the cell inner membrane. The catalysed reaction is L-serine(in) + Na(+)(in) = L-serine(out) + Na(+)(out). It catalyses the reaction L-threonine(in) + Na(+)(in) = L-threonine(out) + Na(+)(out). Its function is as follows. Involved in the import of serine and threonine into the cell, with the concomitant import of sodium (symport system). This Shigella boydii serotype 4 (strain Sb227) protein is Serine/threonine transporter SstT.